The following is a 345-amino-acid chain: UPF0324 membrane protein RB0971 (345 aa).

Helical transmembrane passes span 13-32 (SLSV…AAVA), 42-61 (YGAP…HFLA), 93-115 (LLIG…TILF), 130-152 (ALLT…AAVL), 161-183 (NLIF…YPIV), 193-215 (ATGI…GFSV), 228-247 (LIRV…VLRS), 262-284 (VPGF…VPVL), 291-310 (AISR…KTSL), and 320-342 (AVAL…MYYL).

It belongs to the UPF0324 family.

The protein localises to the cell membrane. This is UPF0324 membrane protein RB0971 from Rhizobium meliloti (strain 1021) (Ensifer meliloti).